Here is a 244-residue protein sequence, read N- to C-terminus: Multiple organellar RNA editing factor 3, mitochondrial (244 aa).

The N-terminal 62 residues, 1–62 (MALISTRRTL…GPCYISTRPK (62 aa)), are a transit peptide targeting the mitochondrion. Disordered stretches follow at residues 59–82 (TRPKTSGSGYSPLNDPSPNWSNRP) and 196–244 (YRFT…KPSA). A compositionally biased stretch (polar residues) spans 60–80 (RPKTSGSGYSPLNDPSPNWSN). The segment covering 210-226 (PRYDRRRETMQVERREP) has biased composition (basic and acidic residues).

The protein belongs to the MORF family. In terms of assembly, heterodimer with MORF1. Homodimer and heterodimers with MORF8/RIP1, MORF4/RIP4 and MORF5/RIP5.

The protein resides in the mitochondrion. Involved in organellar RNA editing. Required for the processing of RNA editing sites in mitochondria. This Arabidopsis thaliana (Mouse-ear cress) protein is Multiple organellar RNA editing factor 3, mitochondrial.